The sequence spans 288 residues: Pyruvate synthase subunit PorB (288 aa).

The [4Fe-4S] cluster site is built by Cys-16, Cys-19, and Cys-44. The span at 137 to 148 shows a compositional bias: polar residues; the sequence is STPYGASTTTSP. The disordered stretch occupies residues 137–159; it reads STPYGASTTTSPHGKESFGEDRP. The segment covering 149 to 159 has biased composition (basic and acidic residues); the sequence is HGKESFGEDRP. Residue Cys-208 coordinates [4Fe-4S] cluster.

As to quaternary structure, heterotetramer of one alpha, one beta, one delta and one gamma chain. Requires [4Fe-4S] cluster as cofactor.

It carries out the reaction 2 oxidized [2Fe-2S]-[ferredoxin] + pyruvate + CoA = 2 reduced [2Fe-2S]-[ferredoxin] + acetyl-CoA + CO2 + H(+). This chain is Pyruvate synthase subunit PorB (porB), found in Methanothermobacter marburgensis (strain ATCC BAA-927 / DSM 2133 / JCM 14651 / NBRC 100331 / OCM 82 / Marburg) (Methanobacterium thermoautotrophicum).